Here is a 441-residue protein sequence, read N- to C-terminus: Xylose isomerase (441 aa).

Active-site residues include H99 and D102. Residues E230, E266, D294, D305, D307, and D337 each contribute to the Mn(2+) site.

The protein belongs to the xylose isomerase family. As to quaternary structure, homotetramer. The cofactor is Mn(2+).

The protein localises to the cytoplasm. The enzyme catalyses alpha-D-xylose = alpha-D-xylulofuranose. The polypeptide is Xylose isomerase (xylA) (Geobacillus stearothermophilus (Bacillus stearothermophilus)).